Reading from the N-terminus, the 325-residue chain is NADH-quinone oxidoreductase subunit H (325 aa).

Helical transmembrane passes span 11-31 (ILLSILKAVVILLVVVTCGAF), 50-69 (NRVGWGGSLQLVADMIKMFF), 81-101 (VIFTLAPMIAFTSLLLSFAIV), 114-134 (IGILFFLMMAGLAVYAVLFAG), 154-174 (VSYEVFLGLSLMGVVAQAGSF), 186-206 (LWNVIPQFFGFVTFAIAGVAV), 237-257 (FFVGEYIGIVTVSALMVTLFF), 265-285 (LPPFVWFALKTAFFMMMFILI), and 304-324 (VCLPLTLINLLVTAAVILWQA).

It belongs to the complex I subunit 1 family. In terms of assembly, NDH-1 is composed of 13 different subunits. Subunits NuoA, H, J, K, L, M, N constitute the membrane sector of the complex.

It localises to the cell inner membrane. It catalyses the reaction a quinone + NADH + 5 H(+)(in) = a quinol + NAD(+) + 4 H(+)(out). Functionally, NDH-1 shuttles electrons from NADH, via FMN and iron-sulfur (Fe-S) centers, to quinones in the respiratory chain. The immediate electron acceptor for the enzyme in this species is believed to be ubiquinone. Couples the redox reaction to proton translocation (for every two electrons transferred, four hydrogen ions are translocated across the cytoplasmic membrane), and thus conserves the redox energy in a proton gradient. This subunit may bind ubiquinone. In Salmonella agona (strain SL483), this protein is NADH-quinone oxidoreductase subunit H.